The sequence spans 227 residues: Small ribosomal subunit protein uS3 (227 aa).

The 69-residue stretch at 39–107 (VREFLDKRLV…PVHINIEEVR (69 aa)) folds into the KH type-2 domain.

It belongs to the universal ribosomal protein uS3 family. Part of the 30S ribosomal subunit. Forms a tight complex with proteins S10 and S14.

In terms of biological role, binds the lower part of the 30S subunit head. Binds mRNA in the 70S ribosome, positioning it for translation. This chain is Small ribosomal subunit protein uS3, found in Marinobacter nauticus (strain ATCC 700491 / DSM 11845 / VT8) (Marinobacter aquaeolei).